The following is a 430-amino-acid chain: Tyrosine--tRNA ligase (430 aa).

Tyr32 is a binding site for L-tyrosine. A 'HIGH' region motif is present at residues 37–46; that stretch reads PTADSLHIGH. Positions 172 and 176 each coordinate L-tyrosine. A 'KMSKS' region motif is present at residues 232–236; that stretch reads KFGKT. Lys235 is an ATP binding site. Residues 362–429 form the S4 RNA-binding domain; that stretch reads VKAVDLFVDN…GKKNYYLIIA (68 aa).

It belongs to the class-I aminoacyl-tRNA synthetase family. TyrS type 1 subfamily. In terms of assembly, homodimer.

It is found in the cytoplasm. The catalysed reaction is tRNA(Tyr) + L-tyrosine + ATP = L-tyrosyl-tRNA(Tyr) + AMP + diphosphate + H(+). In terms of biological role, catalyzes the attachment of tyrosine to tRNA(Tyr) in a two-step reaction: tyrosine is first activated by ATP to form Tyr-AMP and then transferred to the acceptor end of tRNA(Tyr). This Bacteroides fragilis (strain YCH46) protein is Tyrosine--tRNA ligase.